We begin with the raw amino-acid sequence, 113 residues long: Replication initiation control protein YabA (113 aa).

Residues H88, C90, C104, and C107 each coordinate Zn(2+).

It belongs to the YabA family. Homotetramer. Interacts with both DnaA and DnaN, acting as a bridge between these two proteins. It depends on Zn(2+) as a cofactor.

The protein localises to the cytoplasm. It is found in the nucleoid. In terms of biological role, involved in control of chromosome replication initiation. Inhibits the cooperative binding of DnaA to the oriC region, thus negatively regulating initiation of chromosome replication. Inhibits the ability of DnaA-ATP to form a helix on DNA; does not disassemble preformed DnaA-DNA helices. Decreases the residence time of DnaA on the chromosome at its binding sites (oriC, replication forks and promoter-binding sites). Tethers DnaA to the replication machinery via the DNA polymerase beta sliding clamp subunit (dnaN). Associates with oriC and other DnaA targets on the chromosome in a DnaA-dependent manner. The polypeptide is Replication initiation control protein YabA (Staphylococcus saprophyticus subsp. saprophyticus (strain ATCC 15305 / DSM 20229 / NCIMB 8711 / NCTC 7292 / S-41)).